Here is a 197-residue protein sequence, read N- to C-terminus: Cold-regulated 413 plasma membrane protein 1 (197 aa).

The Extracellular segment spans residues 1 to 40 (MPMKSLRNDHGTLKAMIGSDFNELTIAAKNLATHAFTLTG). A helical transmembrane segment spans residues 41 to 61 (LGFGTSVLEWVASIAAIYLLV). The Cytoplasmic portion of the chain corresponds to 62–71 (LDRTNWKTNM). A helical transmembrane segment spans residues 72 to 92 (LTSLLIPYIFFSLPSLIFGIF). Topologically, residues 93-94 (RG) are extracellular. Residues 95-115 (EIGKWIAFVAVVVQLFFPKHA) form a helical membrane-spanning segment. At 116–117 (RE) the chain is on the cytoplasmic side. A helical membrane pass occupies residues 118–138 (YLELPVALVLLAVVAPNLIAG). Over 139–141 (TFR) the chain is Extracellular. A helical membrane pass occupies residues 142–162 (DSWIGLAICLGIGCYLLQEHI). The Cytoplasmic segment spans residues 163-176 (RASGGFRNAFTKAN). Residues 177 to 197 (GISNTVGIICLVVFPVWALIF) traverse the membrane as a helical segment.

It belongs to the Cold-regulated 413 protein family.

The protein localises to the membrane. This chain is Cold-regulated 413 plasma membrane protein 1 (COR413PM1), found in Arabidopsis thaliana (Mouse-ear cress).